A 1293-amino-acid polypeptide reads, in one-letter code: Phosphoribosylformylglycinamidine synthase (1293 aa).

Residues 305–316 and Ala-676 each bind ATP; that span reads GAATGSGGEIRD. Positions 305–327 are disordered; that stretch reads GAATGSGGEIRDEGATGRGSKPK. 4 residues coordinate Mg(2+): Asp-677, Glu-716, Asn-720, and Asp-884. Ser-886 serves as a coordination point for ATP. Residues 1040–1293 enclose the Glutamine amidotransferase type-1 domain; the sequence is MAILREQGVN…MFRNARVNLG (254 aa). Cys-1133 acts as the Nucleophile in catalysis. Active-site residues include His-1258 and Glu-1260.

It in the N-terminal section; belongs to the FGAMS family. In terms of assembly, monomer.

It localises to the cytoplasm. The catalysed reaction is N(2)-formyl-N(1)-(5-phospho-beta-D-ribosyl)glycinamide + L-glutamine + ATP + H2O = 2-formamido-N(1)-(5-O-phospho-beta-D-ribosyl)acetamidine + L-glutamate + ADP + phosphate + H(+). Its pathway is purine metabolism; IMP biosynthesis via de novo pathway; 5-amino-1-(5-phospho-D-ribosyl)imidazole from N(2)-formyl-N(1)-(5-phospho-D-ribosyl)glycinamide: step 1/2. Phosphoribosylformylglycinamidine synthase involved in the purines biosynthetic pathway. Catalyzes the ATP-dependent conversion of formylglycinamide ribonucleotide (FGAR) and glutamine to yield formylglycinamidine ribonucleotide (FGAM) and glutamate. The polypeptide is Phosphoribosylformylglycinamidine synthase (Shewanella oneidensis (strain ATCC 700550 / JCM 31522 / CIP 106686 / LMG 19005 / NCIMB 14063 / MR-1)).